A 338-amino-acid chain; its full sequence is Ketol-acid reductoisomerase (NADP(+)) (338 aa).

In terms of domain architecture, KARI N-terminal Rossmann spans 1–181 (MKVYYDKDAD…GGGKAGIIET (181 aa)). Residues 24–27 (YGSQ), arginine 47, and serine 52 contribute to the NADP(+) site. Histidine 107 is an active-site residue. NADP(+) is bound at residue glycine 133. The KARI C-terminal knotted domain occupies 182 to 327 (NFREETETDL…EKLRAMMPWI (146 aa)). Residues aspartate 190, glutamate 194, glutamate 226, and glutamate 230 each contribute to the Mg(2+) site. Serine 251 is a substrate binding site.

It belongs to the ketol-acid reductoisomerase family. Mg(2+) is required as a cofactor.

The catalysed reaction is (2R)-2,3-dihydroxy-3-methylbutanoate + NADP(+) = (2S)-2-acetolactate + NADPH + H(+). It catalyses the reaction (2R,3R)-2,3-dihydroxy-3-methylpentanoate + NADP(+) = (S)-2-ethyl-2-hydroxy-3-oxobutanoate + NADPH + H(+). It functions in the pathway amino-acid biosynthesis; L-isoleucine biosynthesis; L-isoleucine from 2-oxobutanoate: step 2/4. Its pathway is amino-acid biosynthesis; L-valine biosynthesis; L-valine from pyruvate: step 2/4. Its function is as follows. Involved in the biosynthesis of branched-chain amino acids (BCAA). Catalyzes an alkyl-migration followed by a ketol-acid reduction of (S)-2-acetolactate (S2AL) to yield (R)-2,3-dihydroxy-isovalerate. In the isomerase reaction, S2AL is rearranged via a Mg-dependent methyl migration to produce 3-hydroxy-3-methyl-2-ketobutyrate (HMKB). In the reductase reaction, this 2-ketoacid undergoes a metal-dependent reduction by NADPH to yield (R)-2,3-dihydroxy-isovalerate. The chain is Ketol-acid reductoisomerase (NADP(+)) from Methylibium petroleiphilum (strain ATCC BAA-1232 / LMG 22953 / PM1).